The following is a 556-amino-acid chain: Probable zinc metalloprotease EGY2, chloroplastic (556 aa).

Residues 1-64 (MNLAVASFRG…VFRKRETLVR (64 aa)) constitute a chloroplast transit peptide. The tract at residues 63–133 (VRVTETQTEP…DGDKLEVSSG (71 aa)) is disordered. 7 helical membrane passes run 267 to 287 (AVPE…TLFL), 311 to 331 (LPGA…HILV), 336 to 356 (GIKL…FGAI), 374 to 394 (AAGP…GLFV), 437 to 457 (PLVI…IPAG), 484 to 504 (LLGL…LIFF), and 527 to 547 (LGIL…FAFT).

This sequence belongs to the peptidase M50B family.

It localises to the plastid. The protein resides in the chloroplast membrane. In terms of biological role, probable membrane-associated metalloprotease that may be involved in chloroplast development. This chain is Probable zinc metalloprotease EGY2, chloroplastic (EGY2), found in Arabidopsis thaliana (Mouse-ear cress).